Consider the following 313-residue polypeptide: Acetyl-coenzyme A carboxylase carboxyl transferase subunit alpha (313 aa).

In terms of domain architecture, CoA carboxyltransferase C-terminal spans 42–292 (KSDKLLRDTY…GAAIGEELDK (251 aa)).

Belongs to the AccA family. As to quaternary structure, acetyl-CoA carboxylase is a heterohexamer composed of biotin carboxyl carrier protein (AccB), biotin carboxylase (AccC) and two subunits each of ACCase subunit alpha (AccA) and ACCase subunit beta (AccD).

It is found in the cytoplasm. It carries out the reaction N(6)-carboxybiotinyl-L-lysyl-[protein] + acetyl-CoA = N(6)-biotinyl-L-lysyl-[protein] + malonyl-CoA. Its pathway is lipid metabolism; malonyl-CoA biosynthesis; malonyl-CoA from acetyl-CoA: step 1/1. Component of the acetyl coenzyme A carboxylase (ACC) complex. First, biotin carboxylase catalyzes the carboxylation of biotin on its carrier protein (BCCP) and then the CO(2) group is transferred by the carboxyltransferase to acetyl-CoA to form malonyl-CoA. In Rhizorhabdus wittichii (strain DSM 6014 / CCUG 31198 / JCM 15750 / NBRC 105917 / EY 4224 / RW1) (Sphingomonas wittichii), this protein is Acetyl-coenzyme A carboxylase carboxyl transferase subunit alpha.